The following is a 541-amino-acid chain: Ankyrin repeat domain-containing protein 13C (541 aa).

The span at 1 to 20 (MTGEKIRSLRRDHKPSKEEG) shows a compositional bias: basic and acidic residues. Residues 1–27 (MTGEKIRSLRRDHKPSKEEGDLLEPGD) are disordered. ANK repeat units lie at residues 111-142 (PAHYPVHECVFKGDVRRLSSLIRTHNIGQKDN), 143-172 (HGNTPLHLAVMLGNKECAHLLLAHNAPVKV), and 176-205 (QGWSPLAEAISYGDRQMITALLRKLKQQSR). Serine 411 carries the phosphoserine modification.

The protein resides in the endoplasmic reticulum membrane. Its function is as follows. Acts as a molecular chaperone for G protein-coupled receptors, regulating their biogenesis and exit from the ER. This is Ankyrin repeat domain-containing protein 13C (ANKRD13C) from Homo sapiens (Human).